The sequence spans 286 residues: MAVNYKVSLDDVVDIDYNGVRQAITQFLRKYLEASGASGYVLGVSGGVDSSLALALAVDAVGSGRVTALIMPDREVTPERDVEDALRLVRSFGVEHAVIDISPIVMVYISALPIFEDEEKDRVPVGNLRARIRANILYYYANKLGKLVLGTGDRSEYLIGYFTKYGDAACDVAPLTVLYKSQVRRLAELIGVPRDIAYKPSSPRLWKGHEAEAELGLSYNEIDVILYSRFDLKIPWEEIPRATGLERAKVERVRLLHEASSHKRSPPASPDLGEIKKHYKQHAGKK.

43–50 lines the ATP pocket; sequence GVSGGVDS. Asp49 contributes to the Mg(2+) binding site. A deamido-NAD(+)-binding site is contributed by Arg131. Thr151 contacts ATP. Glu156 serves as a coordination point for Mg(2+). Residues Lys164 and Asp171 each coordinate deamido-NAD(+). 2 residues coordinate ATP: Lys180 and Ser202. The interval 257 to 286 is disordered; sequence HEASSHKRSPPASPDLGEIKKHYKQHAGKK. Residue 262–263 participates in deamido-NAD(+) binding; that stretch reads HK. The span at 277 to 286 shows a compositional bias: basic residues; it reads KHYKQHAGKK.

Belongs to the NAD synthetase family. Homodimer.

It catalyses the reaction deamido-NAD(+) + NH4(+) + ATP = AMP + diphosphate + NAD(+) + H(+). It participates in cofactor biosynthesis; NAD(+) biosynthesis; NAD(+) from deamido-NAD(+) (ammonia route): step 1/1. Its function is as follows. Catalyzes the ATP-dependent amidation of deamido-NAD to form NAD. Uses ammonia as a nitrogen source. The protein is NH(3)-dependent NAD(+) synthetase of Aeropyrum pernix (strain ATCC 700893 / DSM 11879 / JCM 9820 / NBRC 100138 / K1).